The sequence spans 340 residues: Predicted GPI-anchored protein 46 (340 aa).

The N-terminal stretch at 1 to 29 is a signal peptide; the sequence is MKILLIYSMTPKLVIWFTLFVLCLQMGDT. A compositionally biased stretch (low complexity) spans 99–115; sequence SETTTTTTQESETSIAT. 2 disordered regions span residues 99–154 and 181–212; these read SETT…SLSS and MSSSSSSSSGSLRDKSKLKQENKQLQSRIKNY. N-linked (GlcNAc...) asparagine glycosylation is present at Asn127. The segment covering 182-191 has biased composition (low complexity); the sequence is SSSSSSSSGS. Basic and acidic residues predominate over residues 192–202; sequence LRDKSKLKQEN. The N-linked (GlcNAc...) asparagine glycan is linked to Asn270. Asn314 carries GPI-anchor amidated asparagine lipidation. The propeptide at 315–340 is removed in mature form; it reads SAPLLWIKISKPTVCLVIALTFLLLG.

The protein localises to the cell membrane. It localises to the secreted. This Candida albicans (strain SC5314 / ATCC MYA-2876) (Yeast) protein is Predicted GPI-anchored protein 46 (PGA46).